Consider the following 314-residue polypeptide: Malate dehydrogenase (314 aa).

Residues 12–17 and aspartate 36 contribute to the NAD(+) site; that span reads GSGFTG. Arginine 87 and arginine 93 together coordinate substrate. Residues asparagine 100 and 123–125 each bind NAD(+); that span reads LTN. Position 125 (asparagine 125) interacts with substrate. A Phosphoserine modification is found at serine 149. Arginine 156 lines the substrate pocket. Catalysis depends on histidine 180, which acts as the Proton acceptor.

It belongs to the LDH/MDH superfamily. MDH type 3 family.

The catalysed reaction is (S)-malate + NAD(+) = oxaloacetate + NADH + H(+). In terms of biological role, catalyzes the reversible oxidation of malate to oxaloacetate. In Shouchella clausii (strain KSM-K16) (Alkalihalobacillus clausii), this protein is Malate dehydrogenase.